The sequence spans 74 residues: UPF0346 protein SE_1114 (74 aa).

This sequence belongs to the UPF0346 family.

The protein is UPF0346 protein SE_1114 of Staphylococcus epidermidis (strain ATCC 12228 / FDA PCI 1200).